The primary structure comprises 120 residues: UPF0231 protein YacL (120 aa).

The protein belongs to the UPF0231 family.

This is UPF0231 protein YacL from Escherichia coli (strain SMS-3-5 / SECEC).